We begin with the raw amino-acid sequence, 879 residues long: Levansucrase (879 aa).

The N-terminal stretch at 1-37 (MTKEHKKMYKAGKYWAVATLVSASILMEVGVTTHADA) is a signal peptide. 7 repeat units span residues 66 to 81 (DNAT…SIAN), 82 to 97 (DNAT…SIAN), 98 to 113 (DNAT…SIAN), 114 to 129 (DNAT…SVAN), 130 to 145 (DNAT…SVAN), 146 to 161 (DNAT…SVAN), and 162 to 177 (DNAT…SVAN). Positions 66-177 (DNATSGSTKQ…STKQESSVAN (112 aa)) are 7 X 16 AA tandem repeats of D-N-A-T-S-G-S-T-K-Q-E-S-S-[IV]-A-N. Polar residues-rich tracts occupy residues 66–180 (DNAT…NDTK) and 189–213 (NTSN…AATQ). The interval 66–213 (DNATSGSTKQ…NNEQPSAATQ (148 aa)) is disordered. Residues W311, D312, and S382 each contribute to the sucrose site. Residue D312 is the Nucleophile of the active site. D460 is a binding site for Ca(2+). R465 and D466 together coordinate sucrose. The Ca(2+) site is built by Q491, L528, N530, and D562. E563 lines the sucrose pocket. Residue E565 is the Proton donor/acceptor of the active site. R583 is a binding site for sucrose. The disordered stretch occupies residues 743–830 (SSGLGLKPHQ…TPAKPVQAGQ (88 aa)). The span at 754–821 (VNPSQPTTPA…KPVNPSQPTT (68 aa)) shows a compositional bias: polar residues. An LPXTG sorting signal motif is present at residues 841–845 (LPQTG). Position 844 is a pentaglycyl murein peptidoglycan amidated threonine (T844). The propeptide at 845-879 (GENNSQSQTMSFIGILLAMFGSLLGFLGIKKRRND) is removed by sortase.

It belongs to the glycosyl hydrolase 68 family.

The protein resides in the secreted. The protein localises to the cell wall. It catalyses the reaction [6)-beta-D-fructofuranosyl-(2-&gt;](n) alpha-D-glucopyranoside + sucrose = [6)-beta-D-fructofuranosyl-(2-&gt;](n+1) alpha-D-glucopyranoside + D-glucose. With respect to regulation, ca(2+) may play an important structural role and promote stability of levansucrase. Fructosyltransferase that catalyzes the polymerization of the fructose moiety of sucrose to produce levan polymer and the fructo-oligosaccharide (FOS) 1-kestose. Also displays sucrose hydrolase activity. The protein is Levansucrase of Fructilactobacillus sanfranciscensis (Lactobacillus sanfranciscensis).